The sequence spans 122 residues: NADPH-dependent 7-cyano-7-deazaguanine reductase (122 aa).

The Thioimide intermediate role is filled by Cys34. Asp41 (proton donor) is an active-site residue. Substrate-binding positions include 56-58 and 75-76; these read VEL and HE.

Belongs to the GTP cyclohydrolase I family. QueF type 1 subfamily.

The protein localises to the cytoplasm. The enzyme catalyses 7-aminomethyl-7-carbaguanine + 2 NADP(+) = 7-cyano-7-deazaguanine + 2 NADPH + 3 H(+). Its pathway is tRNA modification; tRNA-queuosine biosynthesis. In terms of biological role, catalyzes the NADPH-dependent reduction of 7-cyano-7-deazaguanine (preQ0) to 7-aminomethyl-7-deazaguanine (preQ1). The polypeptide is NADPH-dependent 7-cyano-7-deazaguanine reductase (Anaeromyxobacter sp. (strain Fw109-5)).